Here is a 52-residue protein sequence, read N- to C-terminus: DNA-directed RNA polymerase subunit Rpo12 (52 aa).

Zn(2+) contacts are provided by Cys13, Cys30, and Cys33.

The protein belongs to the archaeal Rpo12/eukaryotic RPC10 RNA polymerase subunit family. In terms of assembly, part of the RNA polymerase complex. The cofactor is Zn(2+).

It localises to the cytoplasm. It carries out the reaction RNA(n) + a ribonucleoside 5'-triphosphate = RNA(n+1) + diphosphate. DNA-dependent RNA polymerase (RNAP) catalyzes the transcription of DNA into RNA using the four ribonucleoside triphosphates as substrates. The sequence is that of DNA-directed RNA polymerase subunit Rpo12 from Pyrobaculum arsenaticum (strain DSM 13514 / JCM 11321 / PZ6).